A 226-amino-acid polypeptide reads, in one-letter code: Uracil-DNA glycosylase (226 aa).

D64 (proton acceptor) is an active-site residue.

This sequence belongs to the uracil-DNA glycosylase (UDG) superfamily. UNG family.

The protein localises to the cytoplasm. It carries out the reaction Hydrolyzes single-stranded DNA or mismatched double-stranded DNA and polynucleotides, releasing free uracil.. Its function is as follows. Excises uracil residues from the DNA which can arise as a result of misincorporation of dUMP residues by DNA polymerase or due to deamination of cytosine. The polypeptide is Uracil-DNA glycosylase (Proteus mirabilis (strain HI4320)).